The primary structure comprises 121 residues: Large ribosomal subunit protein bL12 (121 aa).

It belongs to the bacterial ribosomal protein bL12 family. As to quaternary structure, homodimer. Part of the ribosomal stalk of the 50S ribosomal subunit. Forms a multimeric L10(L12)X complex, where L10 forms an elongated spine to which 2 to 4 L12 dimers bind in a sequential fashion. Binds GTP-bound translation factors.

Its function is as follows. Forms part of the ribosomal stalk which helps the ribosome interact with GTP-bound translation factors. Is thus essential for accurate translation. This Mesomycoplasma hyopneumoniae (strain 232) (Mycoplasma hyopneumoniae) protein is Large ribosomal subunit protein bL12.